The sequence spans 415 residues: MVPVLLILVGALATLQADLLNHKKFLLLPPVNFTIKATGLAQVLLHWDPNPDQEQRHVDLEYHVKINAPQEDEYDTRKTESKCVTPLHEGFAASVRTILKSSHTTLASSWVSAELKAPPGSPGTSVTNLTCTTHTVVSSHTHLRPYQVSLRCTWLVGKDAPEDTQYFLYYRFGVLTEKCQEYSRDALNRNTACWFPRTFINSKGFEQLAVHINGSSKRAAIKPFDQLFSPLAIDQVNPPRNVTVEIESNSLYIQWEKPLSAFPDHCFNYELKIYNTKNGHIQKEKLIANKFISKIDDVSTYSIQVRAAVSSPCRMPGRWGEWSQPIYVGKERKSLVEWHLIVLPTAACFVLLIFSLICRVCHLWTRLFPPVPAPKSNIKDLPVVTEYEKPSNETKIEVVHCVEEVGFEVMGNSTF.

The N-terminal stretch at 1-17 (MVPVLLILVGALATLQA) is a signal peptide. Residues 18 to 339 (DLLNHKKFLL…KERKSLVEWH (322 aa)) are Extracellular-facing. In terms of domain architecture, Fibronectin type-III 1 spans 29 to 120 (PPVNFTIKAT…VSAELKAPPG (92 aa)). Asparagine 32 and asparagine 128 each carry an N-linked (GlcNAc...) asparagine glycan. 2 cysteine pairs are disulfide-bonded: cysteine 131-cysteine 152 and cysteine 179-cysteine 193. 2 N-linked (GlcNAc...) asparagine glycosylation sites follow: asparagine 213 and asparagine 241. A Fibronectin type-III 2 domain is found at 238 to 331 (PPRNVTVEIE…WSQPIYVGKE (94 aa)). Cysteine 266 and cysteine 313 are joined by a disulfide. Residues 319–323 (WGEWS) carry the WSXWS motif motif. Residues 340–361 (LIVLPTAACFVLLIFSLICRVC) form a helical membrane-spanning segment. Over 362 to 415 (HLWTRLFPPVPAPKSNIKDLPVVTEYEKPSNETKIEVVHCVEEVGFEVMGNSTF) the chain is Cytoplasmic. Residues 367 to 375 (LFPPVPAPK) carry the Box 1 motif motif.

Interacts with IL5. Interacts with CSF2RB. Interacts with JAK2. Interacts with SDCBP. Expressed on eosinophils and basophils. Also on B-cells.

It is found in the membrane. Functionally, cell surface receptor that plays an important role in the survival, differentiation, and chemotaxis of eosinophils. Acts by forming a heterodimeric receptor with CSF2RB subunit and subsequently binding to interleukin-5. In unstimulated conditions, interacts constitutively with JAK2. Heterodimeric receptor activation leads to JAK2 stimulation and subsequent activation of the JAK-STAT pathway. The polypeptide is Interleukin-5 receptor subunit alpha (Il5ra) (Mus musculus (Mouse)).